Here is a 550-residue protein sequence, read N- to C-terminus: Dihydroxy-acid dehydratase (550 aa).

Aspartate 78 contacts Mg(2+). Cysteine 119 serves as a coordination point for [2Fe-2S] cluster. Mg(2+) contacts are provided by aspartate 120 and lysine 121. Lysine 121 carries the N6-carboxylysine modification. Cysteine 191 contributes to the [2Fe-2S] cluster binding site. Residue glutamate 440 coordinates Mg(2+). The Proton acceptor role is filled by serine 466.

This sequence belongs to the IlvD/Edd family. As to quaternary structure, homodimer. Requires [2Fe-2S] cluster as cofactor. Mg(2+) serves as cofactor.

It catalyses the reaction (2R)-2,3-dihydroxy-3-methylbutanoate = 3-methyl-2-oxobutanoate + H2O. It carries out the reaction (2R,3R)-2,3-dihydroxy-3-methylpentanoate = (S)-3-methyl-2-oxopentanoate + H2O. It participates in amino-acid biosynthesis; L-isoleucine biosynthesis; L-isoleucine from 2-oxobutanoate: step 3/4. The protein operates within amino-acid biosynthesis; L-valine biosynthesis; L-valine from pyruvate: step 3/4. Its function is as follows. Functions in the biosynthesis of branched-chain amino acids. Catalyzes the dehydration of (2R,3R)-2,3-dihydroxy-3-methylpentanoate (2,3-dihydroxy-3-methylvalerate) into 2-oxo-3-methylpentanoate (2-oxo-3-methylvalerate) and of (2R)-2,3-dihydroxy-3-methylbutanoate (2,3-dihydroxyisovalerate) into 2-oxo-3-methylbutanoate (2-oxoisovalerate), the penultimate precursor to L-isoleucine and L-valine, respectively. The chain is Dihydroxy-acid dehydratase from Methanococcus vannielii (strain ATCC 35089 / DSM 1224 / JCM 13029 / OCM 148 / SB).